Reading from the N-terminus, the 962-residue chain is Voltage-gated delayed rectifier potassium channel KCNH1 (962 aa).

The Cytoplasmic portion of the chain corresponds to 1 to 220 (MTMAGGRRGL…LHYCVFKTTW (220 aa)). A PAS domain is found at 14–94 (QNTFLENIVR…QTFENYEMNS (81 aa)). Residues 93–145 (NSFEILMYKKNRTPVWFFVKIAPIRNEQDKVVLFLCTFSDITAFKQPIEDDSC) form the PAC domain. Residues 151–162 (FARLTRALTSSR) are required for phosphatidylinositol bisphosphate binding. A helical membrane pass occupies residues 221-241 (DWIILILTFYTAILVPYNVSF). Topologically, residues 242–248 (KTRQNNV) are extracellular. The helical transmembrane segment at 249–269 (AWLVVDSIVDVIFLVDIVLNF) threads the bilayer. Residues 270-290 (HTTFVGPAGEVISDPKLIRMN) are Cytoplasmic-facing. Residues 291-309 (YLKTWFVIDLLSCLPYDVI) traverse the membrane as a helical segment. The Extracellular portion of the chain corresponds to 310-318 (NAFENVDEG). The chain crosses the membrane as a helical; Voltage-sensor span at residues 319 to 341 (ISSLFSSLKVVRLLRLGRVARKL). Residues 342–350 (DHYIEYGAA) are Cytoplasmic-facing. A helical membrane pass occupies residues 351–372 (VLVLLVCVFGLAAHWMACIWYS). At 373-421 (IGDYEIFDEDTKTIRNNSWLYQLALDIGTPYQFNGSGSGKWEGGPSKNS) the chain is on the extracellular side. N388 and N406 each carry an N-linked (GlcNAc...) asparagine glycan. An intramembrane region (pore-forming) is located at residues 422–443 (VYISSLYFTMTSLTSVGFGNIA). Positions 436–441 (SVGFGN) match the Selectivity filter motif. The Extracellular portion of the chain corresponds to 444-450 (PSTDIEK). The chain crosses the membrane as a helical span at residues 451–471 (IFAVAIMMIGSLLYATIFGNV). At 472–962 (TTIFQQMYAN…ESDRDIFGAS (491 aa)) the chain is on the cytoplasmic side. Residues 646-743 (KRDALQKVLE…LDDLDVEKGN (98 aa)) are calmodulin-binding. The interval 672–674 (YNL) is interaction with cyclic nucleotide-binding pocket. Positions 830–852 (ESMETLPERTKASGEATLKKTDS) are enriched in basic and acidic residues. Disordered regions lie at residues 830–859 (ESME…GITK) and 933–962 (SRGS…FGAS). The interval 897–937 (ATVLEVKHELKEDIKALNAKMTSIEKQLSEILRILMSRGSS) is CAD (involved in subunit assembly). Residues 934-952 (RGSSQSPQDTCEVSRPQSP) are compositionally biased toward polar residues. Residues S947, S951, and S954 each carry the phosphoserine modification. Positions 953–962 (ESDRDIFGAS) are enriched in basic and acidic residues.

It belongs to the potassium channel family. H (Eag) (TC 1.A.1.20) subfamily. Kv10.1/KCNH1 sub-subfamily. In terms of assembly, homomultimer. The potassium channel is composed of a homo- or heterotetrameric complex of pore-forming alpha subunits that can associate with modulating beta subunits. Heteromultimer with KCNH5/EAG2. Interacts with ALG10B. Interacts with RABEP1. Interacts (via C-terminus) with CTTN. Interacts (via cytoplasmic region) with Ca(2+)-bound calmodulin. Channel activity is regulated via tyrosine phosphorylation/dephosphorylation by SRC and PTPN6. Detected in cerebellum, at parallel fiber synapses on Purkinje cell spines. Detected in hippocampus neurons (at protein level). Detected in brain, but not in the other tissues tested; expression is highest in granular cells of the dentate gyrus, in hippocampus CA3 pyramidal cells, and in cerebellar granule cells. Detected in pituitary.

Its subcellular location is the cell membrane. It is found in the nucleus inner membrane. It localises to the cell projection. The protein localises to the dendrite. The protein resides in the axon. Its subcellular location is the presynaptic cell membrane. It is found in the perikaryon. It localises to the postsynaptic density membrane. The protein localises to the early endosome membrane. It catalyses the reaction K(+)(in) = K(+)(out). With respect to regulation, channel activity is inhibited by interaction with Ca(2+)-bound calmodulin. Interaction of a single pore-forming alpha subunit with a calmodulin chain is sufficient to promote channel closure. Channel activity is not regulated by cyclic nucleotides. Channel activity is inhibited by binding intracellular phosphatidylinositol-3,5-bisphosphate and phosphatidylinositol-4,5-bisphosphate (PIP2), but is not inhibited by phosphatidylinositol 4-phosphate. Functionally, pore-forming (alpha) subunit of a voltage-gated delayed rectifier potassium channel that mediates outward-rectifying potassium currents which, on depolarization, reaches a steady-state level and do not inactivate. The activation kinetics depend on the prepulse potential and external divalent cation concentration. With negative prepulses, the current activation is delayed and slowed down several fold, whereas more positive prepulses speed up activation. The time course of activation is biphasic with a fast and a slowly activating current component. Activates at more positive membrane potentials and exhibit a steeper activation curve. Channel properties are modulated by subunit assembly. Mediates IK(NI) current in myoblasts. Involved in the regulation of cell proliferation and differentiation, in particular adipogenic and osteogenic differentiation in bone marrow-derived mesenchymal stem cells (MSCs). This is Voltage-gated delayed rectifier potassium channel KCNH1 from Rattus norvegicus (Rat).